The sequence spans 350 residues: Hydroxymethylglutaryl-CoA synthase (350 aa).

(3S)-3-hydroxy-3-methylglutaryl-CoA is bound at residue aspartate 30. The active-site Proton donor/acceptor is the glutamate 82. The (3S)-3-hydroxy-3-methylglutaryl-CoA site is built by cysteine 114, serine 155, threonine 203, and histidine 236. The Acyl-thioester intermediate role is filled by cysteine 114. Histidine 236 serves as the catalytic Proton donor/acceptor. Arginine 241 is a binding site for CoA. The (3S)-3-hydroxy-3-methylglutaryl-CoA site is built by arginine 245, asparagine 268, and serine 298.

The protein belongs to the thiolase-like superfamily. Archaeal HMG-CoA synthase family. As to quaternary structure, interacts with acetoacetyl-CoA thiolase that catalyzes the precedent step in the pathway and with a DUF35 protein. The acetoacetyl-CoA thiolase/HMG-CoA synthase complex channels the intermediate via a fused CoA-binding site, which allows for efficient coupling of the endergonic thiolase reaction with the exergonic HMGCS reaction.

It carries out the reaction acetoacetyl-CoA + acetyl-CoA + H2O = (3S)-3-hydroxy-3-methylglutaryl-CoA + CoA + H(+). It participates in metabolic intermediate biosynthesis; (R)-mevalonate biosynthesis; (R)-mevalonate from acetyl-CoA: step 2/3. In terms of biological role, catalyzes the condensation of acetyl-CoA with acetoacetyl-CoA to form 3-hydroxy-3-methylglutaryl-CoA (HMG-CoA). Functions in the mevalonate (MVA) pathway leading to isopentenyl diphosphate (IPP), a key precursor for the biosynthesis of isoprenoid compounds that are building blocks of archaeal membrane lipids. The chain is Hydroxymethylglutaryl-CoA synthase from Pyrobaculum calidifontis (strain DSM 21063 / JCM 11548 / VA1).